The following is a 595-amino-acid chain: uncharacterized protein (595 aa).

A signal peptide spans methionine 1–alanine 23. N-linked (GlcNAc...) asparagine glycans are attached at residues asparagine 31, asparagine 63, asparagine 88, asparagine 112, asparagine 144, asparagine 187, asparagine 205, asparagine 389, asparagine 480, asparagine 492, and asparagine 506. Residues leucine 61–glycine 83 show a composition bias toward polar residues. 2 disordered regions span residues leucine 61–leucine 119 and threonine 141–glutamate 164. Residues asparagine 84–leucine 119 show a composition bias toward low complexity.

The protein localises to the secreted. This is an uncharacterized protein from Drosophila melanogaster (Fruit fly).